The chain runs to 287 residues: Acetylglutamate kinase (287 aa).

Residues 64–65 (GG), arginine 86, and asparagine 181 contribute to the substrate site.

It belongs to the acetylglutamate kinase family. ArgB subfamily.

The protein resides in the cytoplasm. It carries out the reaction N-acetyl-L-glutamate + ATP = N-acetyl-L-glutamyl 5-phosphate + ADP. Its pathway is amino-acid biosynthesis; L-arginine biosynthesis; N(2)-acetyl-L-ornithine from L-glutamate: step 2/4. Its function is as follows. Catalyzes the ATP-dependent phosphorylation of N-acetyl-L-glutamate. The polypeptide is Acetylglutamate kinase (Desulforamulus reducens (strain ATCC BAA-1160 / DSM 100696 / MI-1) (Desulfotomaculum reducens)).